The chain runs to 87 residues: Small ribosomal subunit protein bS16 (87 aa).

This sequence belongs to the bacterial ribosomal protein bS16 family.

This Buchnera aphidicola subsp. Baizongia pistaciae (strain Bp) protein is Small ribosomal subunit protein bS16.